A 156-amino-acid polypeptide reads, in one-letter code: SsrA-binding protein (156 aa).

It belongs to the SmpB family.

The protein localises to the cytoplasm. In terms of biological role, required for rescue of stalled ribosomes mediated by trans-translation. Binds to transfer-messenger RNA (tmRNA), required for stable association of tmRNA with ribosomes. tmRNA and SmpB together mimic tRNA shape, replacing the anticodon stem-loop with SmpB. tmRNA is encoded by the ssrA gene; the 2 termini fold to resemble tRNA(Ala) and it encodes a 'tag peptide', a short internal open reading frame. During trans-translation Ala-aminoacylated tmRNA acts like a tRNA, entering the A-site of stalled ribosomes, displacing the stalled mRNA. The ribosome then switches to translate the ORF on the tmRNA; the nascent peptide is terminated with the 'tag peptide' encoded by the tmRNA and targeted for degradation. The ribosome is freed to recommence translation, which seems to be the essential function of trans-translation. This Lactiplantibacillus plantarum (strain ATCC BAA-793 / NCIMB 8826 / WCFS1) (Lactobacillus plantarum) protein is SsrA-binding protein.